The following is a 745-amino-acid chain: Kinesin-like protein KIN-14M (745 aa).

The interval 1–31 is disordered; the sequence is MVGEMTNNGRIRPSFPVKDLTSNEGSEYGGP. A globular region spans residues 1-35; it reads MVGEMTNNGRIRPSFPVKDLTSNEGSEYGGPVEFT. Microtubule-binding regions lie at residues 65-77 and 198-745; these read YVKR…RWFQ and SLQL…LSLG. 2 coiled-coil regions span residues 76-223 and 259-389; these read FQEL…GEKE and KDEL…GNIR. The Kinesin motor domain occupies 387 to 724; sequence NIRVFCRVRP…LRFAARVNAC (338 aa). Residue 472–479 participates in ATP binding; it reads GQTGSGKT.

Belongs to the TRAFAC class myosin-kinesin ATPase superfamily. Kinesin family. KIN-14 subfamily. As to quaternary structure, bind to microtubules in an ATP-insensitive manner (in vitro). Homodimer and heterodimer with KIN14N/KATC (in vitro).

It is found in the cytoplasm. The protein resides in the cytoskeleton. The protein is Kinesin-like protein KIN-14M of Arabidopsis thaliana (Mouse-ear cress).